A 570-amino-acid chain; its full sequence is Sulfite reductase [NADPH] hemoprotein beta-component (570 aa).

Residues Cys-434, Cys-440, Cys-479, and Cys-483 each coordinate [4Fe-4S] cluster. Cys-483 is a siroheme binding site.

Belongs to the nitrite and sulfite reductase 4Fe-4S domain family. In terms of assembly, alpha(8)-beta(8). The alpha component is a flavoprotein, the beta component is a hemoprotein. Siroheme serves as cofactor. It depends on [4Fe-4S] cluster as a cofactor.

It carries out the reaction hydrogen sulfide + 3 NADP(+) + 3 H2O = sulfite + 3 NADPH + 4 H(+). Its pathway is sulfur metabolism; hydrogen sulfide biosynthesis; hydrogen sulfide from sulfite (NADPH route): step 1/1. Its function is as follows. Component of the sulfite reductase complex that catalyzes the 6-electron reduction of sulfite to sulfide. This is one of several activities required for the biosynthesis of L-cysteine from sulfate. This is Sulfite reductase [NADPH] hemoprotein beta-component from Escherichia coli (strain B / BL21-DE3).